The chain runs to 351 residues: Protein RecA (351 aa).

ATP is bound at residue 67–74 (GPESSGKT).

The protein belongs to the RecA family.

Its subcellular location is the cytoplasm. Its function is as follows. Can catalyze the hydrolysis of ATP in the presence of single-stranded DNA, the ATP-dependent uptake of single-stranded DNA by duplex DNA, and the ATP-dependent hybridization of homologous single-stranded DNAs. It interacts with LexA causing its activation and leading to its autocatalytic cleavage. The polypeptide is Protein RecA (Arthrobacter sp. (strain FB24)).